The sequence spans 391 residues: 3-ketoacyl-CoA thiolase (391 aa).

Residue C95 is the Acyl-thioester intermediate of the active site. Residues H347 and C377 each act as proton acceptor in the active site.

Belongs to the thiolase-like superfamily. Thiolase family. As to quaternary structure, heterotetramer of two alpha chains (FadB) and two beta chains (FadA).

It localises to the cytoplasm. It catalyses the reaction an acyl-CoA + acetyl-CoA = a 3-oxoacyl-CoA + CoA. Its pathway is lipid metabolism; fatty acid beta-oxidation. Its function is as follows. Catalyzes the final step of fatty acid oxidation in which acetyl-CoA is released and the CoA ester of a fatty acid two carbons shorter is formed. In Pseudomonas aeruginosa (strain UCBPP-PA14), this protein is 3-ketoacyl-CoA thiolase.